The primary structure comprises 167 residues: Protein-export protein SecB (167 aa).

This sequence belongs to the SecB family. As to quaternary structure, homotetramer, a dimer of dimers. One homotetramer interacts with 1 SecA dimer.

The protein localises to the cytoplasm. Its function is as follows. One of the proteins required for the normal export of preproteins out of the cell cytoplasm. It is a molecular chaperone that binds to a subset of precursor proteins, maintaining them in a translocation-competent state. It also specifically binds to its receptor SecA. The sequence is that of Protein-export protein SecB from Wolbachia pipientis wMel.